Reading from the N-terminus, the 332-residue chain is F-box/SPRY domain-containing protein 1 (332 aa).

Positions 1-82 are disordered; that stretch reads MAENDGETIV…RSPRRPEVSA (82 aa). 2 stretches are compositionally biased toward polar residues: residues 15-28 and 49-64; these read CNLT…SSGL and NPSS…QLTP. An F-box domain is found at 79-127; that stretch reads EVSASRLPLKVLNQIFQYLPLKDLRSAMLTCHSWNNALSMEDSDIWQYL. In terms of domain architecture, B30.2/SPRY spans 138–330; the sequence is SDPFLLAELG…VTMVYVGSPQ (193 aa).

This sequence belongs to the FBXO45/Fsn family. As to quaternary structure, component of an SCF (SKP1-CUL1-F-box protein) E3 ubiquitin ligase complex composed of cul-1, fsn-1, rpm-1 and skr-1. Interacts (via SPRY domain) with scd-2 (via cytoplasmic domain). Interacts (via SPRY domain) with convertase egl-3 (via C-terminus). As to expression, expressed in GABAergic neuromuscular junctions (NMJs).

It is found in the synapse. It participates in protein modification; protein ubiquitination. Functionally, component of a SCF (SKP1-CUL1-F-box protein) E3 ubiquitin ligase complex which is required for the restriction and/or maturation of synapses in GABAergic neuromuscular junction (NMJ) presynaptic neurons. Promotes NRJ synapse development and synaptic transmission by negatively regulating the daf-2/InsR pathway in muscles. By targeting convertase egl-3 for degradation, negatively modulates insulin-like protein ins-4 and ins-6 processing. May stabilize synapse formation by promoting the down-regulation of scd-2. Regulates axon termination in PLM and ALM neurons. The chain is F-box/SPRY domain-containing protein 1 (fsn-1) from Caenorhabditis elegans.